The chain runs to 150 residues: Cyanate hydratase (150 aa).

Residues arginine 91, glutamate 94, and serine 117 contribute to the active site.

Belongs to the cyanase family.

The enzyme catalyses cyanate + hydrogencarbonate + 3 H(+) = NH4(+) + 2 CO2. Functionally, catalyzes the reaction of cyanate with bicarbonate to produce ammonia and carbon dioxide. This Synechococcus sp. (strain CC9311) protein is Cyanate hydratase.